We begin with the raw amino-acid sequence, 250 residues long: PHD finger protein ALFIN-LIKE 3 (250 aa).

Residue methionine 1 is modified to N-acetylmethionine. The interval 146–192 (DKSSAANQNGNKSKSNSKVRTSEGKSSKTKQPKEEDEEIDEDDEDDH) is disordered. Over residues 149-163 (SAANQNGNKSKSNSK) the composition is skewed to low complexity. A compositionally biased stretch (acidic residues) spans 179–192 (EEDEEIDEDDEDDH). A PHD-type zinc finger spans residues 194 to 246 (ETLCGACGDSDGADEFWICCDLCEKWFHGKCVKITPARAEHIKQYKCPSCSNK).

It belongs to the Alfin family. As to expression, ubiquitously expressed.

It is found in the nucleus. Histone-binding component that specifically recognizes H3 tails trimethylated on 'Lys-4' (H3K4me3), which mark transcription start sites of virtually all active genes. This is PHD finger protein ALFIN-LIKE 3 (AL3) from Arabidopsis thaliana (Mouse-ear cress).